The chain runs to 380 residues: Tetraacyldisaccharide 4'-kinase (380 aa).

Residue 51-58 participates in ATP binding; it reads SVGGTGKT.

It belongs to the LpxK family.

The enzyme catalyses a lipid A disaccharide + ATP = a lipid IVA + ADP + H(+). Its pathway is glycolipid biosynthesis; lipid IV(A) biosynthesis; lipid IV(A) from (3R)-3-hydroxytetradecanoyl-[acyl-carrier-protein] and UDP-N-acetyl-alpha-D-glucosamine: step 6/6. Transfers the gamma-phosphate of ATP to the 4'-position of a tetraacyldisaccharide 1-phosphate intermediate (termed DS-1-P) to form tetraacyldisaccharide 1,4'-bis-phosphate (lipid IVA). This Bacteroides thetaiotaomicron (strain ATCC 29148 / DSM 2079 / JCM 5827 / CCUG 10774 / NCTC 10582 / VPI-5482 / E50) protein is Tetraacyldisaccharide 4'-kinase.